Consider the following 279-residue polypeptide: Urease accessory protein UreD (279 aa).

The protein belongs to the UreD family. UreD, UreF and UreG form a complex that acts as a GTP-hydrolysis-dependent molecular chaperone, activating the urease apoprotein by helping to assemble the nickel containing metallocenter of UreC. The UreE protein probably delivers the nickel.

It is found in the cytoplasm. Required for maturation of urease via the functional incorporation of the urease nickel metallocenter. The chain is Urease accessory protein UreD from Trichormus variabilis (strain ATCC 29413 / PCC 7937) (Anabaena variabilis).